A 51-amino-acid chain; its full sequence is Protein 1.4 (51 aa).

A signal peptide spans 1 to 23 (MFKKVGKFLAALAAILTLAYILA). A helical transmembrane segment spans residues 28–48 (VALVVVGACYLAAVCACVWSI).

The protein localises to the host membrane. The sequence is that of Protein 1.4 from Escherichia coli (Bacteriophage T7).